Reading from the N-terminus, the 462-residue chain is Argininosuccinate lyase (462 aa).

The protein belongs to the lyase 1 family. Argininosuccinate lyase subfamily.

It is found in the cytoplasm. It carries out the reaction 2-(N(omega)-L-arginino)succinate = fumarate + L-arginine. It functions in the pathway amino-acid biosynthesis; L-arginine biosynthesis; L-arginine from L-ornithine and carbamoyl phosphate: step 3/3. The chain is Argininosuccinate lyase from Methylobacterium sp. (strain 4-46).